A 349-amino-acid polypeptide reads, in one-letter code: Phosphate acyltransferase (349 aa).

Belongs to the PlsX family. As to quaternary structure, homodimer. Probably interacts with PlsY.

Its subcellular location is the cytoplasm. The enzyme catalyses a fatty acyl-[ACP] + phosphate = an acyl phosphate + holo-[ACP]. It functions in the pathway lipid metabolism; phospholipid metabolism. Its function is as follows. Catalyzes the reversible formation of acyl-phosphate (acyl-PO(4)) from acyl-[acyl-carrier-protein] (acyl-ACP). This enzyme utilizes acyl-ACP as fatty acyl donor, but not acyl-CoA. In Akkermansia muciniphila (strain ATCC BAA-835 / DSM 22959 / JCM 33894 / BCRC 81048 / CCUG 64013 / CIP 107961 / Muc), this protein is Phosphate acyltransferase.